Consider the following 333-residue polypeptide: Beta-ketoacyl-[acyl-carrier-protein] synthase III (333 aa).

Active-site residues include Cys116 and His258. Positions 259–263 (QANKR) are ACP-binding. Asn288 is an active-site residue.

Belongs to the thiolase-like superfamily. FabH family. As to quaternary structure, homodimer.

It is found in the cytoplasm. The enzyme catalyses malonyl-[ACP] + acetyl-CoA + H(+) = 3-oxobutanoyl-[ACP] + CO2 + CoA. It participates in lipid metabolism; fatty acid biosynthesis. In terms of biological role, catalyzes the condensation reaction of fatty acid synthesis by the addition to an acyl acceptor of two carbons from malonyl-ACP. Catalyzes the first condensation reaction which initiates fatty acid synthesis and may therefore play a role in governing the total rate of fatty acid production. Possesses both acetoacetyl-ACP synthase and acetyl transacylase activities. Its substrate specificity determines the biosynthesis of branched-chain and/or straight-chain of fatty acids. The polypeptide is Beta-ketoacyl-[acyl-carrier-protein] synthase III (Koribacter versatilis (strain Ellin345)).